The sequence spans 236 residues: UPF0173 metal-dependent hydrolase Mnod_3315 (236 aa).

It belongs to the UPF0173 family.

In Methylobacterium nodulans (strain LMG 21967 / CNCM I-2342 / ORS 2060), this protein is UPF0173 metal-dependent hydrolase Mnod_3315.